Here is a 260-residue protein sequence, read N- to C-terminus: DNA repair protein RecO (260 aa).

A disordered region spans residues 239–260 (SAGVAAARKAGGDGSDGDEGEQ).

It belongs to the RecO family.

Functionally, involved in DNA repair and RecF pathway recombination. In Sodalis glossinidius (strain morsitans), this protein is DNA repair protein RecO.